The chain runs to 86 residues: Small ribosomal subunit protein uS17 (86 aa).

Belongs to the universal ribosomal protein uS17 family. As to quaternary structure, part of the 30S ribosomal subunit.

Functionally, one of the primary rRNA binding proteins, it binds specifically to the 5'-end of 16S ribosomal RNA. The chain is Small ribosomal subunit protein uS17 from Roseiflexus castenholzii (strain DSM 13941 / HLO8).